We begin with the raw amino-acid sequence, 132 residues long: MSLSDPIADFLTRLRNGQAGMNKVVFVPHSKVVRSILDILLAEGYIEGFTEESKSSGIKYLKVCLKYYNCAPVIKKIVRVSRPGKRVYSSADRLPKFYNGLGVYIVSTSQGVMLDYRARKLGIGGEILCGVF.

It belongs to the universal ribosomal protein uS8 family. Part of the 30S ribosomal subunit. Contacts proteins S5 and S12.

In terms of biological role, one of the primary rRNA binding proteins, it binds directly to 16S rRNA central domain where it helps coordinate assembly of the platform of the 30S subunit. This chain is Small ribosomal subunit protein uS8, found in Anaplasma marginale (strain Florida).